We begin with the raw amino-acid sequence, 167 residues long: Crossover junction endodeoxyribonuclease RuvC (167 aa).

Catalysis depends on residues Asp-14, Glu-75, and Asp-147. The Mg(2+) site is built by Asp-14, Glu-75, and Asp-147.

The protein belongs to the RuvC family. In terms of assembly, homodimer which binds Holliday junction (HJ) DNA. The HJ becomes 2-fold symmetrical on binding to RuvC with unstacked arms; it has a different conformation from HJ DNA in complex with RuvA. In the full resolvosome a probable DNA-RuvA(4)-RuvB(12)-RuvC(2) complex forms which resolves the HJ. It depends on Mg(2+) as a cofactor.

Its subcellular location is the cytoplasm. The enzyme catalyses Endonucleolytic cleavage at a junction such as a reciprocal single-stranded crossover between two homologous DNA duplexes (Holliday junction).. In terms of biological role, the RuvA-RuvB-RuvC complex processes Holliday junction (HJ) DNA during genetic recombination and DNA repair. Endonuclease that resolves HJ intermediates. Cleaves cruciform DNA by making single-stranded nicks across the HJ at symmetrical positions within the homologous arms, yielding a 5'-phosphate and a 3'-hydroxyl group; requires a central core of homology in the junction. The consensus cleavage sequence is 5'-(A/T)TT(C/G)-3'. Cleavage occurs on the 3'-side of the TT dinucleotide at the point of strand exchange. HJ branch migration catalyzed by RuvA-RuvB allows RuvC to scan DNA until it finds its consensus sequence, where it cleaves and resolves the cruciform DNA. The chain is Crossover junction endodeoxyribonuclease RuvC from Synechocystis sp. (strain ATCC 27184 / PCC 6803 / Kazusa).